Reading from the N-terminus, the 142-residue chain is Large ribosomal subunit protein uL13 (142 aa).

This sequence belongs to the universal ribosomal protein uL13 family. Part of the 50S ribosomal subunit.

In terms of biological role, this protein is one of the early assembly proteins of the 50S ribosomal subunit, although it is not seen to bind rRNA by itself. It is important during the early stages of 50S assembly. The protein is Large ribosomal subunit protein uL13 of Shewanella baltica (strain OS223).